The chain runs to 937 residues: Periplasmic nitrate reductase (937 aa).

The segment at residues 1 to 31 (MSMNRREFLKTTAAAAAASAVGISIPSEAKA) is a signal peptide (tat-type signal). The region spanning 40–96 (WQWDKAVCRFCGTGCGIMVAVKDDKIVAVKGDPESPVNRGINCIKGYFNAKIMYGAD) is the 4Fe-4S Mo/W bis-MGD-type domain. [4Fe-4S] cluster-binding residues include Cys-47, Cys-50, Cys-54, and Cys-82. Mo-bis(molybdopterin guanine dinucleotide) is bound by residues Lys-84, Gln-152, Asn-177, Cys-181, 214 to 221 (WGANMAEM), Met-422, Gln-426, Asn-532, Lys-580, Asp-607, and 827 to 836 (TGRVLEHWHS). Trp-903 lines the substrate pocket. Mo-bis(molybdopterin guanine dinucleotide) is bound by residues Asn-911 and Lys-928.

It belongs to the prokaryotic molybdopterin-containing oxidoreductase family. NasA/NapA/NarB subfamily. In terms of assembly, component of the periplasmic nitrate reductase NapAB complex composed of NapA and NapB. The cofactor is [4Fe-4S] cluster. Mo-bis(molybdopterin guanine dinucleotide) is required as a cofactor. Post-translationally, predicted to be exported by the Tat system. The position of the signal peptide cleavage has not been experimentally proven.

The protein localises to the periplasm. The enzyme catalyses 2 Fe(II)-[cytochrome] + nitrate + 2 H(+) = 2 Fe(III)-[cytochrome] + nitrite + H2O. Its function is as follows. Catalytic subunit of the periplasmic nitrate reductase complex NapAB. Receives electrons from NapB and catalyzes the reduction of nitrate to nitrite. The chain is Periplasmic nitrate reductase from Nautilia profundicola (strain ATCC BAA-1463 / DSM 18972 / AmH).